Consider the following 1894-residue polypeptide: Plexin-A2 (1894 aa).

Positions 1 to 34 (MEQRRPWPRALEVDSRSVVLLSVVWVLLAPPAAG) are cleaved as a signal peptide. In terms of domain architecture, Sema spans 35–508 (MPQFSTFHSE…SERQVTRVPV (474 aa)). The Extracellular segment spans residues 35–1237 (MPQFSTFHSE…VISDSLLTLP (1203 aa)). Residues N76 and N91 are each glycosylated (N-linked (GlcNAc...) asparagine). 10 disulfides stabilise this stretch: C94/C103, C129/C137, C284/C405, C300/C356, C374/C393, C511/C528, C517/C559, C520/C537, C531/C543, and C594/C613. Residue N327 is glycosylated (N-linked (GlcNAc...) asparagine). N-linked (GlcNAc...) asparagine glycans are attached at residues N598, N696, and N756. 4 consecutive IPT/TIG domains span residues 858 to 951 (PQIT…QYTF), 954 to 1037 (PSVL…QFEY), 1041 to 1139 (PRVQ…KFIY), and 1143 to 1228 (PTFE…SVSV). The N-linked (GlcNAc...) asparagine glycan is linked to N1205. The chain crosses the membrane as a helical span at residues 1238–1258 (AIVSIAAGGSLLLIIVIIVLI). The Cytoplasmic segment spans residues 1259–1894 (AYKRKSREND…QLINAMSIES (636 aa)). A coiled-coil region spans residues 1261–1310 (KRKSRENDLTLKRLQMQMDNLESRVALECKEAFAELQTDINELTSDLDRS). Residue S1612 is modified to Phosphoserine.

It belongs to the plexin family. As to quaternary structure, homodimer. The PLXNA2 homodimer interacts with a SEMA6A homodimer, giving rise to a heterotetramer. Interacts directly with NRP1 and NRP2. Interacts with RND1. As to expression, detected in fetal brain.

Its subcellular location is the cell membrane. Functionally, coreceptor for SEMA3A and SEMA6A. Necessary for signaling by SEMA6A and class 3 semaphorins and subsequent remodeling of the cytoskeleton. Plays a role in axon guidance, invasive growth and cell migration. Class 3 semaphorins bind to a complex composed of a neuropilin and a plexin. The plexin modulates the affinity of the complex for specific semaphorins, and its cytoplasmic domain is required for the activation of down-stream signaling events in the cytoplasm. The polypeptide is Plexin-A2 (PLXNA2) (Homo sapiens (Human)).